Consider the following 134-residue polypeptide: UPF0102 protein Rmet_3430 (134 aa).

It belongs to the UPF0102 family.

The sequence is that of UPF0102 protein Rmet_3430 from Cupriavidus metallidurans (strain ATCC 43123 / DSM 2839 / NBRC 102507 / CH34) (Ralstonia metallidurans).